Here is a 355-residue protein sequence, read N- to C-terminus: Probable F-box protein At5g36000 (355 aa).

Residues 1-14 (MNTRSGDAEGDIRG) show a composition bias toward basic and acidic residues. Residues 1-44 (MNTRSGDAEGDIRGKMIAPVRDGNGGQKRKLVQSNDIQRDEDGG) are disordered. The region spanning 78-124 (QSRFSWYEQDIWTYITRFLDGKSLVKLGATNKWFYKIAMEDTVWRFA) is the F-box; degenerate domain.

The chain is Probable F-box protein At5g36000 from Arabidopsis thaliana (Mouse-ear cress).